The chain runs to 342 residues: MRFSDSVVLIFGGTTGIGLMTTIDFIIHNTSHIILASRSKWKWKRAIEKIQNIFGDLVNLSNEFNISVLNSTVEYIPCDIRIENDVKQTIQKTIDKYHYINVYFNNAGIQPTTGHTDGDITEIEIPSEKLFDGTIVYKISQNNSNNDNLNNDNSNNDNSSVCSTPASSYCENPIATFIMGMTFCLKHEVKFALEQKSNIPVSIINMSSRNGVNIPSSDRPIYSACKAFIHSMTQTIATQSAKLGIEKNRSIRVNCIAPGPILTPLEIPIFLPDKKNVFEPLSNLELQQFQEIGSHGVPMKRTGTTNEISPTVLFLADYNQSSYITGSTITIDGGYTASPLIG.

9-31 is a binding site for NADP(+); it reads LIFGGTTGIGLMTTIDFIIHNTS. Serine 208 is a substrate binding site. The active-site Proton acceptor is tyrosine 222.

The protein belongs to the short-chain dehydrogenases/reductases (SDR) family.

This is an uncharacterized protein from Acanthamoeba polyphaga (Amoeba).